The sequence spans 131 residues: Small ribosomal subunit protein uS8 (131 aa).

The protein belongs to the universal ribosomal protein uS8 family. As to quaternary structure, part of the 30S ribosomal subunit. Contacts proteins S5 and S12.

In terms of biological role, one of the primary rRNA binding proteins, it binds directly to 16S rRNA central domain where it helps coordinate assembly of the platform of the 30S subunit. The protein is Small ribosomal subunit protein uS8 of Thiobacillus denitrificans (strain ATCC 25259 / T1).